Reading from the N-terminus, the 245-residue chain is MSRFDESVNIYSDGHLLQVEYAQEAVRKGSTVGLRTKECVVLGVEKRAIDSLQIERTSRKIKKIDQHMAMTFAGLTADARVLVSRAQVEAQSHRLNFDRPASVEYITRYLARLKQTYTQSVARRPFGVSCLIGGFDEDGRPRLFQTDPSGIYYEWSANTTGRLGQTVNEYLEKNTAAISRTPDAASAMKHVVRALFTATSLDPASIELAVLRYWQPIEMVKPETLEYLLGVIKQEAVEEALTKAP.

It belongs to the peptidase T1A family. In terms of assembly, the 26S proteasome consists of a 20S proteasome core and two 19S regulatory subunits. The 20S proteasome core is composed of 28 subunits that are arranged in four stacked rings, resulting in a barrel-shaped structure. The two end rings are each formed by seven alpha subunits, and the two central rings are each formed by seven beta subunits. The catalytic chamber with the active sites is on the inside of the barrel. Testis specific.

Its subcellular location is the cytoplasm. It localises to the nucleus. In terms of biological role, the proteasome is a multicatalytic proteinase complex which is characterized by its ability to cleave peptides with Arg, Phe, Tyr, Leu, and Glu adjacent to the leaving group at neutral or slightly basic pH. The proteasome has an ATP-dependent proteolytic activity. This is Proteasome subunit alpha type-7-1B (Pros28.1B) from Drosophila virilis (Fruit fly).